Here is a 361-residue protein sequence, read N- to C-terminus: Fructose-bisphosphate aldolase (361 aa).

S63 is a binding site for D-glyceraldehyde 3-phosphate. The active-site Proton donor is D110. H111, D145, E175, and H227 together coordinate Zn(2+). A dihydroxyacetone phosphate-binding site is contributed by G228. A Zn(2+)-binding site is contributed by H266. Residues 267–269 (GGS) and 288–291 (NLDT) each bind dihydroxyacetone phosphate.

The protein belongs to the class II fructose-bisphosphate aldolase family. Homodimer. Requires Zn(2+) as cofactor.

The enzyme catalyses beta-D-fructose 1,6-bisphosphate = D-glyceraldehyde 3-phosphate + dihydroxyacetone phosphate. The protein operates within carbohydrate degradation; glycolysis; D-glyceraldehyde 3-phosphate and glycerone phosphate from D-glucose: step 4/4. Its function is as follows. Catalyzes the aldol condensation of dihydroxyacetone phosphate (DHAP or glycerone-phosphate) with glyceraldehyde 3-phosphate (G3P) to form fructose 1,6-bisphosphate (FBP) in gluconeogenesis and the reverse reaction in glycolysis. In Kluyveromyces lactis (strain ATCC 8585 / CBS 2359 / DSM 70799 / NBRC 1267 / NRRL Y-1140 / WM37) (Yeast), this protein is Fructose-bisphosphate aldolase (FBA1).